The primary structure comprises 134 residues: Large-conductance mechanosensitive channel (134 aa).

The next 2 helical transmembrane spans lie at 16-36 and 81-101; these read VIDL…VTAL and GDFI…FIVV.

The protein belongs to the MscL family. Homopentamer.

It is found in the cell inner membrane. Channel that opens in response to stretch forces in the membrane lipid bilayer. May participate in the regulation of osmotic pressure changes within the cell. In Stenotrophomonas maltophilia (strain K279a), this protein is Large-conductance mechanosensitive channel.